The chain runs to 285 residues: MSSGRLLLGATPLGQPSDASPRLAAALATADVVAAEDTRRVRKLAKALDIRIGGRVVSLFDRVEALRVTALLDAINNGATVLVVSDAGTPVISDPGYRLVAACIDAGVSVTCLPGPSAVTTALVMSGLPAEKFCFEGFAPRKGAARRAWLAELAEERRTCVFFESPRRLAACLNDAVEQLGGARPAAICRELTKVHEEVVRGSLDELAIWAAGGVLGEITVVVAGAAPHAELSSLIAQVEEFVAAGIRVKDACSEVAAAHPGVRTRQLYDAVLQSRRETGGPAQP.

The protein belongs to the methyltransferase superfamily. RsmI family.

The protein resides in the cytoplasm. It catalyses the reaction cytidine(1402) in 16S rRNA + S-adenosyl-L-methionine = 2'-O-methylcytidine(1402) in 16S rRNA + S-adenosyl-L-homocysteine + H(+). Functionally, catalyzes the 2'-O-methylation of the ribose of cytidine 1402 (C1402) in 16S rRNA. This is Ribosomal RNA small subunit methyltransferase I from Mycobacterium tuberculosis (strain ATCC 25618 / H37Rv).